A 161-amino-acid polypeptide reads, in one-letter code: Immunity protein YezG (161 aa).

As to quaternary structure, monomer. Interacts with the C-terminus of cognate toxin YeeF, probably with 2:2 stoichiometry. The second YezG molecules binds with lower affinity.

It is found in the cytoplasm. Its function is as follows. Immunity component of an LXG toxin-immunity module. These modules promote kin selection, mediate competition in biofilms, and drive spatial segregation of different strains, indicating that LXG toxins may help avoid warfare between strains in biofilms. Neutralizes the toxic abilities of cognate toxin YeeF upon expression in E.coli and in vitro. This Bacillus spizizenii (strain ATCC 23059 / NRRL B-14472 / W23) (Bacillus subtilis subsp. spizizenii) protein is Immunity protein YezG.